Reading from the N-terminus, the 593-residue chain is Zinc metalloproteinase-disintegrin-like kaouthiagin-like (593 aa).

The signal sequence occupies residues 1–20; that stretch reads MIQALLVIICLAVFPHQGSS. A propeptide spanning residues 21–196 is cleaved from the precursor; that stretch reads IILESGNVND…KTSQFTNTPE (176 aa). The Peptidase M12B domain occupies 205-400; sequence KYIEFYVIVD…DRPQCILNKP (196 aa). Residues E208 and D292 each coordinate Ca(2+). Disulfide bonds link C316-C395, C356-C379, and C358-C363. N319 is a glycosylation site (N-linked (GlcNAc...) asparagine). Zn(2+) is bound by residues H341, H345, and H351. Residues C395, N398, I410, N413, F415, E417, E420, and D423 each contribute to the Ca(2+) site. The 70-residue stretch at 408 to 477 folds into the Disintegrin domain; sequence PPICGNYFVE…ECPTDSLQRN (70 aa). Intrachain disulfides connect C411–C440, C422–C435, C424–C430, C434–C462, C449–C469, C456–C488, C481–C493, C500–C550, C515–C558, C528–C538, C545–C581, and C575–C586. Positions 455–457 match the D/ECD-tripeptide motif; it reads DCD. Ca(2+) is bound by residues D457, L458, E460, D472, and S473. N-linked (GlcNAc...) asparagine glycosylation occurs at N490.

It belongs to the venom metalloproteinase (M12B) family. P-III subfamily. P-IIIa sub-subfamily. In terms of assembly, monomer. Zn(2+) serves as cofactor. As to expression, expressed by the venom gland.

It is found in the secreted. Functionally, snake venom zinc metalloproteinase that cleaves the membrane-bound precursor of TNF-alpha (TNF) into its mature soluble form showing the same digestion pattern than ADAM17. The polypeptide is Zinc metalloproteinase-disintegrin-like kaouthiagin-like (Naja atra (Chinese cobra)).